A 555-amino-acid polypeptide reads, in one-letter code: Undecaprenyl phosphate-alpha-4-amino-4-deoxy-L-arabinose arabinosyl transferase (555 aa).

Helical transmembrane passes span 6-26 (GSWA…PLNG), 87-107 (FGSV…AMLM), 116-136 (LATL…YSVL), 178-198 (FMTK…PIVI), 206-226 (LLIY…PWAL), 257-277 (APFW…LALL), 293-313 (ELFF…IAKG), 315-335 (LPTY…AYAE), 351-371 (VLNG…GSGL), 384-404 (PKIV…VVSV), and 411-431 (WSWA…AIPQ).

The protein belongs to the glycosyltransferase 83 family.

It localises to the cell inner membrane. The catalysed reaction is 4-amino-4-deoxy-alpha-L-arabinopyranosyl di-trans,octa-cis-undecaprenyl phosphate + lipid IVA = lipid IIA + di-trans,octa-cis-undecaprenyl phosphate.. The protein operates within lipopolysaccharide metabolism; 4-amino-4-deoxy-beta-L-arabinose-lipid A biosynthesis. In terms of biological role, catalyzes the transfer of the L-Ara4N moiety of the glycolipid undecaprenyl phosphate-alpha-L-Ara4N to lipid A. The modified arabinose is attached to lipid A and is required for resistance to polymyxin and cationic antimicrobial peptides. This Serratia proteamaculans (strain 568) protein is Undecaprenyl phosphate-alpha-4-amino-4-deoxy-L-arabinose arabinosyl transferase.